The primary structure comprises 110 residues: Thiosulfate sulfurtransferase GlpE (110 aa).

One can recognise a Rhodanese domain in the interval 17-105; that stretch reads HQGKAVLVDI…WHRHFPAEVE (89 aa). C65 (cysteine persulfide intermediate) is an active-site residue.

The protein belongs to the GlpE family.

The protein localises to the cytoplasm. It carries out the reaction thiosulfate + hydrogen cyanide = thiocyanate + sulfite + 2 H(+). It catalyses the reaction thiosulfate + [thioredoxin]-dithiol = [thioredoxin]-disulfide + hydrogen sulfide + sulfite + 2 H(+). Functionally, transferase that catalyzes the transfer of sulfur from thiosulfate to thiophilic acceptors such as cyanide or dithiols. May function in a CysM-independent thiosulfate assimilation pathway by catalyzing the conversion of thiosulfate to sulfite, which can then be used for L-cysteine biosynthesis. In Enterobacter sp. (strain 638), this protein is Thiosulfate sulfurtransferase GlpE.